The following is a 353-amino-acid chain: tRNA-splicing endonuclease (353 aa).

Residues Y289, H300, and K331 contribute to the active site.

Belongs to the tRNA-intron endonuclease family. Archaeal long subfamily. Homodimer.

It carries out the reaction pretRNA = a 3'-half-tRNA molecule with a 5'-OH end + a 5'-half-tRNA molecule with a 2',3'-cyclic phosphate end + an intron with a 2',3'-cyclic phosphate and a 5'-hydroxyl terminus.. In terms of biological role, endonuclease that removes tRNA introns. Cleaves pre-tRNA at the 5'- and 3'-splice sites to release the intron. The products are an intron and two tRNA half-molecules bearing 2',3' cyclic phosphate and 5'-OH termini. Recognizes a pseudosymmetric substrate in which 2 bulged loops of 3 bases are separated by a stem of 4 bp. The chain is tRNA-splicing endonuclease from Methanosarcina mazei (strain ATCC BAA-159 / DSM 3647 / Goe1 / Go1 / JCM 11833 / OCM 88) (Methanosarcina frisia).